Consider the following 379-residue polypeptide: Putative acetyl-CoA C-acetyltransferase VraB (379 aa).

The Acyl-thioester intermediate role is filled by Cys86. Catalysis depends on His338, which acts as the Proton acceptor.

This sequence belongs to the thiolase-like superfamily. Thiolase family.

This chain is Putative acetyl-CoA C-acetyltransferase VraB (vraB), found in Staphylococcus aureus (strain MSSA476).